Here is an 805-residue protein sequence, read N- to C-terminus: FAD-dependent monooxygenase verC1 (805 aa).

The first 20 residues, 1-20 (MTFRVIIVGGGVAGLTLASA), serve as a signal peptide directing secretion. Positions 32, 46, and 107 each coordinate FAD. N132 is a glycosylation site (N-linked (GlcNAc...) asparagine). Y214 is an active-site residue. Positions 306 and 319 each coordinate FAD. The next 7 membrane-spanning stretches (helical) occupy residues 551 to 571 (ALTMAQIPTLFTFYGQMAGLG), 604 to 624 (IAVLPAIIVSYYIPLSAAFFW), 632 to 652 (SWLFVWQMHPIWTAITLYLFS), 671 to 691 (LPVIKFSMTVLVIGAAGFWMW), 703 to 723 (VFFPTAVPSTQAPFAACVCAI), 726 to 746 (WDMLSTFGSTFLWLGYLIWDL), and 761 to 781 (IYGVAAFVALGPGAAIGLGWL).

The protein belongs to the paxM FAD-dependent monooxygenase family.

Its subcellular location is the membrane. The protein operates within secondary metabolite biosynthesis; terpenoid biosynthesis. It participates in mycotoxin biosynthesis. Its function is as follows. FAD-dependent monooxygenase; part of the gene cluster that mediates the biosynthesis of the neurotoxin verrucosidin, a methylated alpha-pyrone polyketide that inhibits oxidative phosphorylation in mitochondria and thereby causes neurological diseases. The carbon backbone of verrucosidin is synthesized by the HR-PKS verA, and further modified by the other verrucodidin cluster enzymes. The protein is FAD-dependent monooxygenase verC1 of Penicillium polonicum.